Here is a 507-residue protein sequence, read N- to C-terminus: MVTIRADEISNIIRERIEQYNREVTIVNTGTVLQVGDGIARIYGLDEVMAGELVEFDEGTIGIALNLESNNVGVVLMGDGLMIQEGSSVKATGKIAQIPVSEAYLGRVINALANPIDGRGKISASESRLIESPAPGIISRRSVYEPLQTGLIAIDSMIPIGRGQRELIIGDRQTGKTAVATDTILNQQGQNVICVYVAIGQKASSVAQVVTSLQERGAMEYTIVVAETADAPATLQYLAPYTGAALAEYFMYREQHTLIIYDDLSKQAQAYRQMSLLLRRPPGREAYPGDVFYLHSRLLERAAKLSSQLGEGSMTALPIVETQSGDVSAYIPTNVISITDGQIFLSADLFNAGIRPAINVGISVSRVGSAAQIKAMKQVAGKLKLELAQFAELEAFAQFSSDLDKATQNQLARGQRLRELLKQSQSAPLTVEEQIMTIYTGTNGYLDGLEIGQVRKFLVQLRTYLKTNKPQFQEIIASTKTLTAEAESFLKEGIQEQLERFLLQEKV.

ATP is bound at residue 170–177; sequence GDRQTGKT. Thr257 bears the Phosphothreonine mark.

Belongs to the ATPase alpha/beta chains family. In terms of assembly, F-type ATPases have 2 components, CF(1) - the catalytic core - and CF(0) - the membrane proton channel. CF(1) has five subunits: alpha(3), beta(3), gamma(1), delta(1), epsilon(1). CF(0) has four main subunits: a, b, b' and c.

Its subcellular location is the plastid. The protein localises to the chloroplast thylakoid membrane. It catalyses the reaction ATP + H2O + 4 H(+)(in) = ADP + phosphate + 5 H(+)(out). Its function is as follows. Produces ATP from ADP in the presence of a proton gradient across the membrane. The alpha chain is a regulatory subunit. This Capsella bursa-pastoris (Shepherd's purse) protein is ATP synthase subunit alpha, chloroplastic.